The sequence spans 338 residues: MSNRELRVGLVGAGLMGSDHATRIHRRISGASLVAVGDPDLERAERAAAGIEGCQVETDPLKVIEASDVDAVVLATPGRTHEPLLLAAIERGIPVLCEKPLTPDSKSSLRVVEAEVAAGRRLVQVGFMRRFDPEYAELKRTLHAGALGRPLLMHCAHRNASAPPGFTSQMMIFDSVVHEFDTTRWLLGEEITAVSVRHPRSTANAPSGMTDPQLVTIETASGVLVTVEIFVNCGFGYQVRCEAVCEGGTAQVGGDSGMTTHVRGAWGGSVAPDFRPRFQQAFDEELQRWADAARAGGIDGASAWDGCAAAAACEAGVAAQTSGARTPVQLVERPGLYA.

This sequence belongs to the Gfo/Idh/MocA family. As to quaternary structure, homotetramer.

It catalyses the reaction myo-inositol + NAD(+) = scyllo-inosose + NADH + H(+). In terms of biological role, involved in the oxidation of myo-inositol (MI) to 2-keto-myo-inositol (2KMI or 2-inosose). This Saccharopolyspora erythraea (strain ATCC 11635 / DSM 40517 / JCM 4748 / NBRC 13426 / NCIMB 8594 / NRRL 2338) protein is Inositol 2-dehydrogenase 4.